The chain runs to 236 residues: Class B acid phosphatase (236 aa).

Positions 1 to 22 (MNHTLRSITLVLACVASLSANA) are cleaved as a signal peptide. Asp70 acts as the Nucleophile in catalysis. Mg(2+)-binding residues include Asp70 and Asp72. Asp72 functions as the Proton donor in the catalytic mechanism. Residues 138–139 (TG) and Lys176 contribute to the substrate site. Asp191 is a binding site for Mg(2+).

This sequence belongs to the class B bacterial acid phosphatase family. Homotetramer. Requires Mg(2+) as cofactor.

The protein resides in the periplasm. The catalysed reaction is a phosphate monoester + H2O = an alcohol + phosphate. In terms of biological role, dephosphorylates several organic phosphate monoesters. Also has a phosphotransferase activity catalyzing the transfer of low-energy phosphate groups from organic phosphate monoesters to free hydroxyl groups of various organic compounds. In Marinomonas sp. (strain MWYL1), this protein is Class B acid phosphatase.